The sequence spans 402 residues: CCA-adding enzyme (402 aa).

ATP-binding residues include G32 and R35. Positions 32 and 35 each coordinate CTP. Positions 45 and 47 each coordinate Mg(2+). Positions 116, 159, 162, 165, and 168 each coordinate ATP. Positions 116, 159, 162, 165, and 168 each coordinate CTP.

The protein belongs to the tRNA nucleotidyltransferase/poly(A) polymerase family. Bacterial CCA-adding enzyme type 3 subfamily. In terms of assembly, homodimer. Mg(2+) serves as cofactor.

It carries out the reaction a tRNA precursor + 2 CTP + ATP = a tRNA with a 3' CCA end + 3 diphosphate. It catalyses the reaction a tRNA with a 3' CCA end + 2 CTP + ATP = a tRNA with a 3' CCACCA end + 3 diphosphate. In terms of biological role, catalyzes the addition and repair of the essential 3'-terminal CCA sequence in tRNAs without using a nucleic acid template. Adds these three nucleotides in the order of C, C, and A to the tRNA nucleotide-73, using CTP and ATP as substrates and producing inorganic pyrophosphate. tRNA 3'-terminal CCA addition is required both for tRNA processing and repair. Also involved in tRNA surveillance by mediating tandem CCA addition to generate a CCACCA at the 3' terminus of unstable tRNAs. While stable tRNAs receive only 3'-terminal CCA, unstable tRNAs are marked with CCACCA and rapidly degraded. This chain is CCA-adding enzyme, found in Streptococcus pyogenes serotype M1.